The sequence spans 612 residues: Threonine--tRNA ligase (612 aa).

The tract at residues aspartate 218–proline 509 is catalytic. The Zn(2+) site is built by cysteine 310, histidine 361, and histidine 486.

This sequence belongs to the class-II aminoacyl-tRNA synthetase family. As to quaternary structure, homodimer. Requires Zn(2+) as cofactor.

Its subcellular location is the cytoplasm. The enzyme catalyses tRNA(Thr) + L-threonine + ATP = L-threonyl-tRNA(Thr) + AMP + diphosphate + H(+). Its function is as follows. Catalyzes the attachment of threonine to tRNA(Thr) in a two-step reaction: L-threonine is first activated by ATP to form Thr-AMP and then transferred to the acceptor end of tRNA(Thr). Also edits incorrectly charged L-seryl-tRNA(Thr). The sequence is that of Threonine--tRNA ligase from Helicobacter pylori (strain HPAG1).